A 268-amino-acid polypeptide reads, in one-letter code: 26S proteasome regulatory subunit RPN10 (268 aa).

The region spanning 5-190 (ATVLVIDNSE…LYENIASSPI (186 aa)) is the VWFA domain. Residues 223–242 (SMDPELAMALRLSMEEEQQR) form the UIM domain. Residues 226–268 (PELAMALRLSMEEEQQRQERLRQQQQQQDQPEQSEQPEQHQDK) are disordered. Basic and acidic residues predominate over residues 235-247 (SMEEEQQRQERLR). Residues 248–261 (QQQQQQDQPEQSEQ) show a composition bias toward low complexity.

This sequence belongs to the proteasome subunit S5A family. In terms of assembly, the 26S proteasome is composed of a core protease, known as the 20S proteasome, capped at one or both ends by the 19S regulatory complex (RC). The RC is composed of at least 18 different subunits in two subcomplexes, the base and the lid, which form the portions proximal and distal to the 20S proteolytic core, respectively. Ubiquitinated, leading to its degradation. Ubiquitination is promoted by HUL5.

Multiubiquitin binding protein. The chain is 26S proteasome regulatory subunit RPN10 (RPN10) from Saccharomyces cerevisiae (strain ATCC 204508 / S288c) (Baker's yeast).